The following is a 468-amino-acid chain: Glutamate--tRNA ligase (468 aa).

The 'HIGH' region signature appears at 12–22 (PSPTGMMHIGT). A 'KMSKS' region motif is present at residues 238–242 (KLSKR). Residue Lys241 participates in ATP binding.

It belongs to the class-I aminoacyl-tRNA synthetase family. Glutamate--tRNA ligase type 1 subfamily. As to quaternary structure, monomer.

It is found in the cytoplasm. It carries out the reaction tRNA(Glu) + L-glutamate + ATP = L-glutamyl-tRNA(Glu) + AMP + diphosphate. Catalyzes the attachment of glutamate to tRNA(Glu) in a two-step reaction: glutamate is first activated by ATP to form Glu-AMP and then transferred to the acceptor end of tRNA(Glu). This Phenylobacterium zucineum (strain HLK1) protein is Glutamate--tRNA ligase.